We begin with the raw amino-acid sequence, 323 residues long: Flavone synthase cfoJ (323 aa).

FMN serves as cofactor.

It functions in the pathway secondary metabolite biosynthesis; flavonoid biosynthesis. In terms of biological role, FMN-dependent oxidoreductase; part of the gene cluster that mediates the biosynthesis of chlorflavonin, a fungal flavonoid with acetolactate synthase inhibitory activity. Within the pathway, cfoJ acts as a flavone synthase (FNS) and catalyzes the formation of a double bond between C2 and C3, converting the flavanone into a flavone. The pathway begins with the PKS-NRPS hybrid synthetase cfoA that uses benzoic acid or p-hydroxybenzoic acid as a starter unit with four rounds of chain elongation using malonyl-CoA to form the chalcone skeleton. Then, a new type of chalcone isomerase, cfoK, catalyzes the conversion of the chalcone into a flavanone by a histidine-mediated oxa-Michael addition mechanism. The desaturation of flavanone to flavone is catalyzed by a new type of flavone synthase, the flavin mononucleotide (FMN)-dependent oxidoreductase cfoJ. Monooxygenases cfoF, cfoG, and P450 cfoH are responsible for the hydroxylation of the flavonoid skeleton at sites C3, C8, and C2', respectively. Like cfoF, the dehydratase cfoI plays also a role in the hydroxylation of position C3. Methyltransferases cfoB, cfoC, and cfoD then catalyze the methylation of C7-OH, C8-OH, and C3-OH, respectively. Finally, the monooxygenase cfoE is responsible for the chlorination of flavonoid at position C3'. The protein is Flavone synthase cfoJ of Aspergillus candidus.